A 228-amino-acid polypeptide reads, in one-letter code: MNSLDANTRNTKSKGDVRSLRSAGNIPGIIYGGPDQNQKVTVLKKTLKSLIDKGSFLSNIITLNLDGKPQNVLPREITYNVISDEPTHIDFLRVVPGVKIRIEVPVVFINHETSPGLKRGGVLNIVRRKIELKCPSEKIPSAITIDLDGVDIGESFKISSVKLEEGVTPTIIGRDFVIATLAAPTVMKEPEKPAEAEAEAAEDGKEAAPAAEGDKKDDGEKKATEEKK.

The span at 1 to 10 shows a compositional bias: polar residues; that stretch reads MNSLDANTRN. 2 disordered regions span residues 1–20 and 187–228; these read MNSLDANTRNTKSKGDVRSL and MKEP…EEKK. Residues 202 to 228 are compositionally biased toward basic and acidic residues; the sequence is EDGKEAAPAAEGDKKDDGEKKATEEKK.

The protein belongs to the bacterial ribosomal protein bL25 family. CTC subfamily. Part of the 50S ribosomal subunit; part of the 5S rRNA/L5/L18/L25 subcomplex. Contacts the 5S rRNA. Binds to the 5S rRNA independently of L5 and L18.

Functionally, this is one of the proteins that binds to the 5S RNA in the ribosome where it forms part of the central protuberance. This is Large ribosomal subunit protein bL25 from Pelagibacter ubique (strain HTCC1062).